An 88-amino-acid chain; its full sequence is Small ribosomal subunit protein bS20 (88 aa).

The disordered stretch occupies residues 1 to 25 (MANSPQAKKRARQNERRAEVNKARR). Residues 12–22 (RQNERRAEVNK) are compositionally biased toward basic and acidic residues.

Belongs to the bacterial ribosomal protein bS20 family.

In terms of biological role, binds directly to 16S ribosomal RNA. The chain is Small ribosomal subunit protein bS20 from Dinoroseobacter shibae (strain DSM 16493 / NCIMB 14021 / DFL 12).